The following is a 43-amino-acid chain: Protein PsbN (43 aa).

A helical membrane pass occupies residues 5 to 27; sequence TFITIFISCLLVSVTGYALYTAF.

This sequence belongs to the PsbN family.

It localises to the plastid. Its subcellular location is the chloroplast thylakoid membrane. May play a role in photosystem I and II biogenesis. The chain is Protein PsbN from Chara vulgaris (Common stonewort).